Consider the following 331-residue polypeptide: Ribose operon repressor (331 aa).

The HTH lacI-type domain maps to 1 to 56 (MTTIRDVAKHAKVSVATVSRVLNKKGYVSKEAEEAVLQAIKELNYQPSSVARSLYH). Positions 4-23 (IRDVAKHAKVSVATVSRVLN) form a DNA-binding region, H-T-H motif.

Its function is as follows. Transcriptional repressor for the ribose rbsDACBK operon. The chain is Ribose operon repressor (rbsR) from Halalkalibacterium halodurans (strain ATCC BAA-125 / DSM 18197 / FERM 7344 / JCM 9153 / C-125) (Bacillus halodurans).